The chain runs to 276 residues: Cell division protein FtsQ (276 aa).

Over 1-27 (MSQAALNTRNSEEEVSSRRNNGTRLAG) the chain is Cytoplasmic. A helical transmembrane segment spans residues 28–48 (ILFLLTVLTTVLVSGWVVLGW). At 49 to 276 (MEDAQRLPLS…QQNQAQAEQQ (228 aa)) the chain is on the periplasmic side. The 72-residue stretch at 55–126 (LPLSKLVLTG…DELKIHLVEY (72 aa)) folds into the POTRA domain. Positions 255–276 (GWAPLPPEESTQQQNQAQAEQQ) are disordered. The segment covering 266–276 (QQQNQAQAEQQ) has biased composition (low complexity).

It belongs to the FtsQ/DivIB family. FtsQ subfamily. Part of a complex composed of FtsB, FtsL and FtsQ. The complex can be formed before its localization to the division site. This tripartite complex can be divided further into a subcomplex of FtsB and FtsL, which forms in the absence of FtsQ. Interacts with FtsA, FtsK, FtsL, FtsB, FtsW, FtsI, FtsN, FtsX and YmgF.

The protein localises to the cell inner membrane. Its function is as follows. Essential cell division protein. May link together the upstream cell division proteins, which are predominantly cytoplasmic, with the downstream cell division proteins, which are predominantly periplasmic. May control correct divisome assembly. The protein is Cell division protein FtsQ of Escherichia coli (strain K12).